Here is a 429-residue protein sequence, read N- to C-terminus: Guanine nucleotide-binding protein subunit alpha (429 aa).

Residue glycine 2 is the site of N-myristoyl glycine attachment. Residue cysteine 3 is the site of S-palmitoyl cysteine attachment. The G-alpha domain maps to 40 to 429 (KGVKLLLLGA…QQNLKKSGIM (390 aa)). The G1 motif stretch occupies residues 43 to 56 (KLLLLGAGESGKST). 6 residues coordinate GTP: glutamate 51, serine 52, glycine 53, lysine 54, serine 55, and threonine 56. Serine 55 provides a ligand contact to Mg(2+). The interval 125-197 (LKQIDADVAG…KDSEQFTRLS (73 aa)) is not present in other G-proteins. Residues 249-257 (DILKGRIKT) are G2 motif. Residues leucine 251, threonine 257, glycine 279, asparagine 345, lysine 346, aspartate 348, and alanine 401 each contribute to the GTP site. Mg(2+) is bound at residue threonine 257. The tract at residues 272–281 (FKVLDAGGQR) is G3 motif. The tract at residues 341–348 (ILFLNKID) is G4 motif. Residues 399–404 (TCATDS) form a G5 motif region.

The protein belongs to the G-alpha family. G(q) subfamily. G proteins are composed of 3 units; alpha, beta and gamma. The alpha chain contains the guanine nucleotide binding site. The cofactor is Mg(2+).

Its function is as follows. Guanine nucleotide-binding proteins (G proteins) are involved as modulators or transducers in various transmembrane signaling systems. Involved in the mating pathway. The polypeptide is Guanine nucleotide-binding protein subunit alpha (CAG1) (Candida albicans (strain WO-1) (Yeast)).